A 237-amino-acid polypeptide reads, in one-letter code: Homeobox protein Nkx-3.1 (237 aa).

Over residues 1–14 (MLRVAEPREPRVEA) the composition is skewed to basic and acidic residues. Disordered stretches follow at residues 1–96 (MLRV…EPES) and 108–130 (EHNPGDLASAPQVTKQPQKRSRA). A compositionally biased stretch (polar residues) spans 24-34 (PTQSKRLTSFL). Composition is skewed to basic and acidic residues over residues 38–47 (ILRDRAERHG) and 57–71 (PDPRRDSAPEPDKAG). A DNA-binding region (homeobox) is located at residues 125–184 (QKRSRAAFSHTQVIELERKFSHQKYLSAPERAHLAKNLKLTETQVKIWFQNRRYKTKRKQ).

It belongs to the NK-3 homeobox family. Interacts with serum response factor (SRF). Interacts with SPDEF. Interacts with WDR77. Interacts with TOPORS which polyubiquitinates NKX3-1 and induces its proteasomal degradation. Interacts with FEM1B. Post-translationally, ubiquitinated by TOPORS; monoubiquitinated at several residues and also polyubiquitinated on single residues. As to expression, expressed mostly in the male urogenital tract, with highest expression in the epithelial cells lining the ducts of anterior, dorsolateral and ventral prostate and in the bulbourethral gland, and much lower in the seminal vesicle and the testis. Expression in the prostate increases during sexual maturation and is drastically reduced following castration. Expressed also in brain (hippocampus and external granular layer of the cerebral cortex), kidney (intralobular arteries), thymus and adrenal and salivary glands.

The protein resides in the nucleus. Its function is as follows. Transcription factor, which binds preferentially the consensus sequence 5'-TAAGT[AG]-3' and can behave as a transcriptional repressor. Plays an important role in normal prostate development, regulating proliferation of glandular epithelium and in the formation of ducts in prostate. Acts as a tumor suppressor controlling prostate carcinogenesis, as shown by the ability to suppress growth and tumorigenicity of prostate carcinoma cells. Plays a role in the formation of minor salivary glands (particularly palatine and lingual glands). In Mus musculus (Mouse), this protein is Homeobox protein Nkx-3.1.